Consider the following 118-residue polypeptide: Large ribosomal subunit protein bL20 (118 aa).

The protein belongs to the bacterial ribosomal protein bL20 family.

In terms of biological role, binds directly to 23S ribosomal RNA and is necessary for the in vitro assembly process of the 50S ribosomal subunit. It is not involved in the protein synthesizing functions of that subunit. In Buchnera aphidicola subsp. Acyrthosiphon pisum (strain 5A), this protein is Large ribosomal subunit protein bL20.